Here is a 389-residue protein sequence, read N- to C-terminus: Na(+)/H(+) antiporter NhaA (389 aa).

11 helical membrane-spanning segments follow: residues 17–37 (ILLL…LAGL), 59–79 (LLLW…GLEV), 95–115 (SLPT…YLLF), 124–144 (AGWA…MALL), 154–174 (VFLL…IALF), 177–197 (TDLS…LVAL), 213–233 (LVLW…GVII), 261–281 (FLIL…NMSL), 287–307 (PVPV…VMLF), 328–348 (IAPV…IASL), and 363–383 (LGTL…LSKV).

Belongs to the NhaA Na(+)/H(+) (TC 2.A.33) antiporter family.

It is found in the cell inner membrane. The catalysed reaction is Na(+)(in) + 2 H(+)(out) = Na(+)(out) + 2 H(+)(in). Its function is as follows. Na(+)/H(+) antiporter that extrudes sodium in exchange for external protons. This Shewanella sp. (strain MR-4) protein is Na(+)/H(+) antiporter NhaA.